Here is a 501-residue protein sequence, read N- to C-terminus: Probable pectate lyase 13 (501 aa).

The N-terminal stretch at 1 to 22 (MLLQNFSNTIFLLCLFFTLLSA) is a signal peptide. Residues N27 and N49 are each glycosylated (N-linked (GlcNAc...) asparagine). Residues 55 to 78 (RQLSSPSSSSSSSSSSSSSSCRTG) are disordered. Low complexity predominate over residues 58–74 (SSPSSSSSSSSSSSSSS). Residues D217, D241, and D245 each contribute to the Ca(2+) site. R297 is an active-site residue. Disordered stretches follow at residues 329–359 (INSQ…DGEW) and 408–463 (NAGV…SSGD). Residues 343–357 (SAKEVTKRVDSKDDG) are compositionally biased toward basic and acidic residues. The segment covering 430–449 (GGDGGGGGSSGGSSGGGMDV) has biased composition (gly residues). Residues 450-463 (MGGTTRGSSSSSGD) show a composition bias toward low complexity. Residue S474 is the site of GPI-anchor amidated serine attachment. The propeptide at 475 to 501 (DAPSRPRLTLLFSLLMISVLSLSTLLL) is removed in mature form.

The protein belongs to the polysaccharide lyase 1 family. It depends on Ca(2+) as a cofactor. As to expression, expressed equally in mature leaves, buds, flowers, rosettes and roots.

It is found in the cell membrane. It carries out the reaction Eliminative cleavage of (1-&gt;4)-alpha-D-galacturonan to give oligosaccharides with 4-deoxy-alpha-D-galact-4-enuronosyl groups at their non-reducing ends.. It participates in glycan metabolism; pectin degradation; 2-dehydro-3-deoxy-D-gluconate from pectin: step 2/5. Functionally, susceptibility factor required for infection by most powdery mildews, but not by unrelated pathogens. Exact function not known, but clearly affects cell wall composition. The protein is Probable pectate lyase 13 (PMR6) of Arabidopsis thaliana (Mouse-ear cress).